Consider the following 637-residue polypeptide: MIVFSSLQIRRGVRVLLDNATATINPGQKVGLVGKNGCGKSTLLALLKNEISADGGSYTFPGSWQLAWVNQETPALPQAALEYVIDGDREYRQLEAQLHDANERNDGHAIATIHGKLDAIDAWSIRSRAASLLHGLGFSNEQLERPVSDFSGGWRMRLNLAQALICRSDLLLLDEPTNHLDLDAVIWLEKWLKSYQGTLILISHDRDFLDPIVDKIIHIEQQSMFEYTGNYSSFEVQRATRLAQQQAMYESQQERVAHLQSYIDRFRAKATKAKQAQSRIKMLERMELIAPAHVDNPFRFSFRAPESLPNPLLKMEKVSAGYGDRIILDSIKLNLVPGSRIGLLGRNGAGKSTLIKLLAGELAPVSGEIGLAKGIKLGYFAQHQLEYLRADESPLQHLARLAPQELEQKLRDYLGGFGFQGDKVTEETRRFSGGEKARLVLALIVWQRPNLLLLDEPTNHLDLDMRQALTEALIEFEGALVVVSHDRHLLRSTTDDLYLVHDRKVEPFDGDLEDYQQWLSDVQKQENQTDEAPKENANSAQARKDQKRREAELRAQTQPLRKEIARLEKEMEKLNAQLAQAEEKLGDSELYDQNRKAELTACLQQQASAKSGLEECEMAWLEAQEQLEQMLLEGQSN.

ABC transporter domains follow at residues 2 to 246 and 313 to 527; these read IVFS…AQQQ and LKME…KQEN. Residues 34–41 and 345–352 contribute to the ATP site; these read GKNGCGKS and GRNGAGKS. The disordered stretch occupies residues 523–559; the sequence is QKQENQTDEAPKENANSAQARKDQKRREAELRAQTQP. Residues 542–553 are compositionally biased toward basic and acidic residues; sequence ARKDQKRREAEL.

It belongs to the ABC transporter superfamily. ABCF family. YheS subfamily.

Its function is as follows. Genetic data indicate it may be involved in ribosome assembly or function. Ectopic expression exacerbates the cold-sensitive growth phenotype of a bipA deletion. In Escherichia coli O6:H1 (strain CFT073 / ATCC 700928 / UPEC), this protein is Probable ATP-binding protein YheS (yheS).